The following is a 355-amino-acid chain: tRNA pseudouridine synthase D (355 aa).

Asp84 acts as the Nucleophile in catalysis. In terms of domain architecture, TRUD spans 160-306; sequence GVPNYFGLQR…MAHERRILRL (147 aa).

This sequence belongs to the pseudouridine synthase TruD family.

The enzyme catalyses uridine(13) in tRNA = pseudouridine(13) in tRNA. Its function is as follows. Responsible for synthesis of pseudouridine from uracil-13 in transfer RNAs. This chain is tRNA pseudouridine synthase D, found in Pseudomonas aeruginosa (strain UCBPP-PA14).